Here is a 445-residue protein sequence, read N- to C-terminus: Solute carrier family 52, riboflavin transporter, member 2 (445 aa).

The next 6 helical transmembrane spans lie at 14-34, 47-67, 86-106, 112-132, 147-167, and 196-216; these read LLVA…WVEL, LPSY…VVTL, VLGM…APVA, VAFL…NVTF, FFLG…VQGV, and FFWA…GLLL. Residues 228–264 are disordered; that stretch reads ELGSGLQVGAPGAEEEVEESSPLQEPPSQAAGTTPGP. Over residues 247-258 the composition is skewed to low complexity; sequence SSPLQEPPSQAA. 5 helical membrane-spanning segments follow: residues 277-297, 312-332, 339-359, 366-386, and 404-424; these read ACLL…LPAV, LAVV…MGVL, LGGL…LAVL, VGTS…LGVF, and ALLA…VAMF.

Belongs to the riboflavin transporter family. In terms of tissue distribution, highly expressed in brain, fetal brain and salivary gland. Weakly expressed in other tissues.

It is found in the cell membrane. It carries out the reaction riboflavin(in) = riboflavin(out). Riboflavin transport is Na(+)-independent but moderately pH-sensitive. Activity is strongly inhibited by riboflavin analogs, such as lumiflavin. Weakly inhibited by flavin adenine dinucleotide (FAD) and flavin mononucleotide (FMN). In terms of biological role, plasma membrane transporter mediating the uptake by cells of the water soluble vitamin B2/riboflavin that plays a key role in biochemical oxidation-reduction reactions of the carbohydrate, lipid, and amino acid metabolism. Humans are unable to synthesize vitamin B2/riboflavin and must obtain it via intestinal absorption. May also act as a receptor for 4-hydroxybutyrate. Its function is as follows. (Microbial infection) In case of infection by retroviruses, acts as a cell receptor to retroviral envelopes similar to the porcine endogenous retrovirus (PERV-A). This Homo sapiens (Human) protein is Solute carrier family 52, riboflavin transporter, member 2 (SLC52A2).